Here is a 39-residue protein sequence, read N- to C-terminus: Colipase (39 aa).

Intrachain disulfides connect Cys16/Cys27 and Cys22/Cys38.

Belongs to the colipase family. Forms a 1:1 stoichiometric complex with pancreatic lipase. Expressed by the pancreas.

Its subcellular location is the secreted. Colipase is a cofactor of pancreatic lipase. It allows the lipase to anchor itself to the lipid-water interface. Without colipase the enzyme is washed off by bile salts, which have an inhibitory effect on the lipase. In Squalus acanthias (Spiny dogfish), this protein is Colipase.